The primary structure comprises 81 residues: LYR motif-containing protein 4 (81 aa).

It belongs to the complex I LYR family.

Its subcellular location is the mitochondrion. It is found in the nucleus. Its pathway is cofactor biosynthesis; iron-sulfur cluster biosynthesis. In terms of biological role, required for nuclear and mitochondrial iron-sulfur protein biosynthesis. The chain is LYR motif-containing protein 4 (lyrm4) from Dictyostelium discoideum (Social amoeba).